A 116-amino-acid chain; its full sequence is Ribonuclease P protein component (116 aa).

It belongs to the RnpA family. As to quaternary structure, consists of a catalytic RNA component (M1 or rnpB) and a protein subunit.

It carries out the reaction Endonucleolytic cleavage of RNA, removing 5'-extranucleotides from tRNA precursor.. Its function is as follows. RNaseP catalyzes the removal of the 5'-leader sequence from pre-tRNA to produce the mature 5'-terminus. It can also cleave other RNA substrates such as 4.5S RNA. The protein component plays an auxiliary but essential role in vivo by binding to the 5'-leader sequence and broadening the substrate specificity of the ribozyme. The polypeptide is Ribonuclease P protein component (Mycobacterium bovis (strain ATCC BAA-935 / AF2122/97)).